Reading from the N-terminus, the 237-residue chain is Uracil-DNA glycosylase (237 aa).

Asp-77 functions as the Proton acceptor in the catalytic mechanism.

Belongs to the uracil-DNA glycosylase (UDG) superfamily. UNG family.

Its subcellular location is the cytoplasm. It catalyses the reaction Hydrolyzes single-stranded DNA or mismatched double-stranded DNA and polynucleotides, releasing free uracil.. Its function is as follows. Excises uracil residues from the DNA which can arise as a result of misincorporation of dUMP residues by DNA polymerase or due to deamination of cytosine. In Acinetobacter baumannii (strain SDF), this protein is Uracil-DNA glycosylase.